We begin with the raw amino-acid sequence, 194 residues long: uncharacterized protein (194 aa).

This sequence belongs to the mimivirus L114/R131 family.

This is an uncharacterized protein from Acanthamoeba polyphaga mimivirus (APMV).